The primary structure comprises 349 residues: AdoMet-dependent heme synthase (349 aa).

Positions 5 to 214 (TNAPRLIAWE…LHWFYEMQKE (210 aa)) constitute a Radical SAM core domain. 3 residues coordinate [4Fe-4S] cluster: C19, C23, and C26.

It belongs to the radical SAM superfamily. The cofactor is [4Fe-4S] cluster.

It catalyses the reaction Fe-coproporphyrin III + 2 S-adenosyl-L-methionine = heme b + 2 5'-deoxyadenosine + 2 L-methionine + 2 CO2. It participates in porphyrin-containing compound metabolism; protoheme biosynthesis. In terms of biological role, involved in siroheme-dependent heme b biosynthesis. Catalyzes the conversion of Fe-coproporphyrin III into heme by the oxidative decarboxylation of two propionate side chains. This is AdoMet-dependent heme synthase from Methanosarcina barkeri (strain Fusaro / DSM 804).